A 53-amino-acid polypeptide reads, in one-letter code: Sec-independent protein translocase protein TatA (53 aa).

Residues 1 to 21 (MGMSLSHLLIVLLIIFVLFGA) traverse the membrane as a helical segment.

The protein belongs to the TatA/E family. The Tat system comprises two distinct complexes: a TatABC complex, containing multiple copies of TatA, TatB and TatC subunits, and a separate TatA complex, containing only TatA subunits. Substrates initially bind to the TatABC complex, which probably triggers association of the separate TatA complex to form the active translocon.

Its subcellular location is the cell inner membrane. Part of the twin-arginine translocation (Tat) system that transports large folded proteins containing a characteristic twin-arginine motif in their signal peptide across membranes. TatA could form the protein-conducting channel of the Tat system. This is Sec-independent protein translocase protein TatA from Rickettsia conorii (strain ATCC VR-613 / Malish 7).